Here is a 396-residue protein sequence, read N- to C-terminus: Ribosomal RNA large subunit methyltransferase I (396 aa).

The PUA domain maps to 2–81 (SVRLVLAKGR…ESIDIAFFTR (80 aa)).

Belongs to the methyltransferase superfamily. RlmI family.

It localises to the cytoplasm. The enzyme catalyses cytidine(1962) in 23S rRNA + S-adenosyl-L-methionine = 5-methylcytidine(1962) in 23S rRNA + S-adenosyl-L-homocysteine + H(+). Functionally, specifically methylates the cytosine at position 1962 (m5C1962) of 23S rRNA. The protein is Ribosomal RNA large subunit methyltransferase I of Escherichia coli (strain UTI89 / UPEC).